We begin with the raw amino-acid sequence, 113 residues long: UPF0145 protein SynWH7803_1684 (113 aa).

This sequence belongs to the UPF0145 family.

The sequence is that of UPF0145 protein SynWH7803_1684 from Synechococcus sp. (strain WH7803).